A 1043-amino-acid chain; its full sequence is Beta-klotho (1043 aa).

Residues 1–994 (MKTGCAAGSP…ICSFLVEKKP (994 aa)) are Extracellular-facing. Glycosyl hydrolase-1 regions lie at residues 77-506 (LYDT…DNGF) and 515-965 (MKGR…SSGL). Residues asparagine 84, asparagine 122, asparagine 161, asparagine 211, asparagine 262, asparagine 308, asparagine 389, asparagine 552, asparagine 609, asparagine 700, asparagine 704, and asparagine 837 are each glycosylated (N-linked (GlcNAc...) asparagine). A helical membrane pass occupies residues 995-1015 (LIFFGCCFISTLAVLLSITVF). Over 1016 to 1043 (HHQKRRKFQKARNLQNIPLKKGHSRVFS) the chain is Cytoplasmic.

This sequence belongs to the glycosyl hydrolase 1 family. Klotho subfamily. In terms of assembly, interacts with FGF19; this interaction is direct. Interacts (via C-terminus) with FGF21; this interaction is direct. Interacts with FGFR1 and FGFR4. Present in liver, muscle and white adipose tissue, but not in kidney (at protein level). Expressed in liver and pancreas, and at lower levels in skin, stomach, skeletal muscle, small intestine and lung.

The protein resides in the cell membrane. Contributes to the transcriptional repression of cholesterol 7-alpha-hydroxylase (CYP7A1), the rate-limiting enzyme in bile acid synthesis. Probably inactive as a glycosidase. Increases the ability of FGFR1 and FGFR4 to bind FGF21. The polypeptide is Beta-klotho (Klb) (Mus musculus (Mouse)).